The following is a 1677-amino-acid chain: ELMO domain-containing protein E (1677 aa).

Disordered stretches follow at residues T112 to S139, N168 to K194, Q264 to E372, D592 to S625, P775 to N801, I888 to I947, K982 to E1002, S1047 to S1075, K1122 to S1141, N1197 to A1248, D1261 to R1404, S1434 to E1454, K1467 to S1593, and E1654 to K1677. Composition is skewed to low complexity over residues S115–S139 and T172–K194. A compositionally biased stretch (gly residues) spans S269–G278. Composition is skewed to low complexity over residues S307 to N334, T341 to S352, and N597 to N616. The 219-residue stretch at S492 to C710 folds into the ELMO domain. Positions N891–V903 are enriched in gly residues. Acidic residues predominate over residues I922–E933. Composition is skewed to low complexity over residues V934 to D946 and S985 to P996. Residues L1186–I1212 adopt a coiled-coil conformation. Residues E1228–E1238 are compositionally biased toward acidic residues. The span at N1285–T1305 shows a compositional bias: low complexity. Residues G1306–S1334 are compositionally biased toward polar residues. Residues D1387–K1397 show a composition bias toward acidic residues. The span at P1445–E1454 shows a compositional bias: polar residues. Low complexity-rich tracts occupy residues L1475–S1488, S1503–S1574, and A1663–K1677.

This Dictyostelium discoideum (Social amoeba) protein is ELMO domain-containing protein E (elmoE).